A 397-amino-acid polypeptide reads, in one-letter code: Lysophospholipid transporter LplT (397 aa).

Residues 1–17 (MSESVHTNTSLWSKGMK) are Periplasmic-facing. The helical transmembrane segment at 18 to 38 (AVIVAQFLSAFGDNALLFATL) threads the bilayer. The Cytoplasmic portion of the chain corresponds to 39 to 52 (ALLNAQFYPEWSQP). Residues 53 to 73 (ILQMVFVGAYILFAPFVGQVA) traverse the membrane as a helical segment. At 74–90 (DSFAKGRVMMFANGLKL) the chain is on the periplasmic side. The helical transmembrane segment at 91–111 (LGAASICFGINPFLGYTLVGV) threads the bilayer. At 112–144 (GAAAYSPAKYGILGELTTGSKLVKANGLMEAST) the chain is on the cytoplasmic side. The helical transmembrane segment at 145–165 (IAAILLGSVAGGVLADWHVLV) threads the bilayer. Position 166 (Ala166) is a topological domain, periplasmic. A helical transmembrane segment spans residues 167–187 (LAACALAYGGAVVANIYIPKL). The Cytoplasmic segment spans residues 188-226 (AAARPGQSWNLINMTRSFLNACTSLWRNGETRFSLVGTS). A helical membrane pass occupies residues 227-247 (LFWGAGVTLRFLLVLWVPVAL). The Periplasmic portion of the chain corresponds to 248 to 256 (GITDNATPT). The helical transmembrane segment at 257 to 277 (YLNAMVAIGIVVGAGAAAKLV) threads the bilayer. Residues 278-280 (TLE) lie on the Cytoplasmic side of the membrane. Residues 281-301 (TVSRCMPAGILIGVVVLIFSL) form a helical membrane-spanning segment. The Periplasmic portion of the chain corresponds to 302–304 (QHE). A helical transmembrane segment spans residues 305 to 325 (LLPAYALLMLIGVMGGFFVVP). Residues 326-343 (LNALLQERGKKSVGAGNA) lie on the Cytoplasmic side of the membrane. The chain crosses the membrane as a helical span at residues 344–364 (IAVQNLGENSAMLLMLGIYSL). The Periplasmic segment spans residues 365–366 (AV). A helical transmembrane segment spans residues 367 to 387 (MIGIPVVPIGIGFGALFALAI). Over 388–397 (TALWIWQRRH) the chain is Cytoplasmic.

Belongs to the major facilitator superfamily. LplT (TC 2.A.1.42) family.

The protein resides in the cell inner membrane. Catalyzes the facilitated diffusion of 2-acyl-glycero-3-phosphoethanolamine (2-acyl-GPE) into the cell. This Escherichia coli (strain SE11) protein is Lysophospholipid transporter LplT.